Consider the following 226-residue polypeptide: Ribonuclease 3 (226 aa).

Residues 6 to 128 (FNKLQKKMGY…IIGGIFLDSN (123 aa)) form the RNase III domain. Position 41 (Glu-41) interacts with Mg(2+). Asp-45 is a catalytic residue. Residues Asn-114 and Glu-117 each contribute to the Mg(2+) site. Glu-117 is an active-site residue. The DRBM domain occupies 155–225 (DPKTRLQEYL…AKQALLLFNI (71 aa)).

This sequence belongs to the ribonuclease III family. As to quaternary structure, homodimer. The cofactor is Mg(2+).

It is found in the cytoplasm. It carries out the reaction Endonucleolytic cleavage to 5'-phosphomonoester.. Digests double-stranded RNA. Involved in the processing of primary rRNA transcript to yield the immediate precursors to the large and small rRNAs (23S and 16S). Processes some mRNAs, and tRNAs when they are encoded in the rRNA operon. Processes pre-crRNA and tracrRNA of type II CRISPR loci if present in the organism. The sequence is that of Ribonuclease 3 from Wigglesworthia glossinidia brevipalpis.